A 274-amino-acid polypeptide reads, in one-letter code: 2,3,4,5-tetrahydropyridine-2,6-dicarboxylate N-succinyltransferase (274 aa).

Residues Arg-104 and Asp-141 each contribute to the substrate site.

It belongs to the transferase hexapeptide repeat family. Homotrimer.

It is found in the cytoplasm. The catalysed reaction is (S)-2,3,4,5-tetrahydrodipicolinate + succinyl-CoA + H2O = (S)-2-succinylamino-6-oxoheptanedioate + CoA. The protein operates within amino-acid biosynthesis; L-lysine biosynthesis via DAP pathway; LL-2,6-diaminopimelate from (S)-tetrahydrodipicolinate (succinylase route): step 1/3. The polypeptide is 2,3,4,5-tetrahydropyridine-2,6-dicarboxylate N-succinyltransferase (Shewanella sp. (strain ANA-3)).